Here is a 201-residue protein sequence, read N- to C-terminus: Twist-related protein 1 (201 aa).

Residues 1–18 (MMQDVSSSPVSPADDSLS) are compositionally biased toward low complexity. The interval 1–106 (MMQDVSSSPV…GGGSPQSYEE (106 aa)) is disordered. Positions 34–43 (RGGRKRRSSR) are enriched in basic residues. 2 stretches are compositionally biased toward gly residues: residues 46–65 (AGGGAGPGGAAGGGVGGGDE) and 80–100 (GCGGGGGGGAGGGGSSSGGGS). The region spanning 109–160 (TQRVMANVRERQRTQSLNEAFAALPKIIPTLPSDKLSKIQTLKLAARYIDFL) is the bHLH domain. A sufficient for transactivation activity region spans residues 162–190 (QVLQSDELDSKMASYVAHERLSYAFSVWR).

Efficient DNA binding requires dimerization with another bHLH protein. Homodimer or heterodimer with E proteins such as TCF3. ID1 binds preferentially to TCF3 but does not interact efficiently with TWIST1 so ID1 levels control the amount of TCF3 available to dimerize with TWIST and thus determine the type of dimer formed.

It is found in the nucleus. In terms of biological role, acts as a transcriptional regulator. Inhibits myogenesis by sequestrating E proteins, inhibiting trans-activation by MEF2, and inhibiting DNA-binding by MYOD1 through physical interaction. This interaction probably involves the basic domains of both proteins. Also represses expression of pro-inflammatory cytokines such as TNFA and IL1B. Regulates cranial suture patterning and fusion. Activates transcription as a heterodimer with E proteins. Regulates gene expression differentially, depending on dimer composition. Homodimers induce expression of FGFR2 and POSTN while heterodimers repress FGFR2 and POSTN expression and induce THBS1 expression. Heterodimerization is also required for osteoblast differentiation. Represses the activity of the circadian transcriptional activator: NPAS2-BMAL1 heterodimer. This Pan troglodytes (Chimpanzee) protein is Twist-related protein 1 (TWIST1).